The following is a 70-amino-acid chain: Small ribosomal subunit protein bS21 (70 aa).

A disordered region spans residues T43–Y70. The segment covering R45–R61 has biased composition (basic residues).

The protein belongs to the bacterial ribosomal protein bS21 family.

This Dechloromonas aromatica (strain RCB) protein is Small ribosomal subunit protein bS21.